Consider the following 234-residue polypeptide: Enolase-phosphatase E1 (234 aa).

The Mg(2+) site is built by D10 and E12. Substrate contacts are provided by residues 125-126 (SS) and K162. D188 contacts Mg(2+).

The protein belongs to the HAD-like hydrolase superfamily. MasA/MtnC family. Monomer. Mg(2+) is required as a cofactor.

The protein resides in the cytoplasm. It localises to the nucleus. It carries out the reaction 5-methylsulfanyl-2,3-dioxopentyl phosphate + H2O = 1,2-dihydroxy-5-(methylsulfanyl)pent-1-en-3-one + phosphate. Its pathway is amino-acid biosynthesis; L-methionine biosynthesis via salvage pathway; L-methionine from S-methyl-5-thio-alpha-D-ribose 1-phosphate: step 3/6. The protein operates within amino-acid biosynthesis; L-methionine biosynthesis via salvage pathway; L-methionine from S-methyl-5-thio-alpha-D-ribose 1-phosphate: step 4/6. Its function is as follows. Bifunctional enzyme that catalyzes the enolization of 2,3-diketo-5-methylthiopentyl-1-phosphate (DK-MTP-1-P) into the intermediate 2-hydroxy-3-keto-5-methylthiopentenyl-1-phosphate (HK-MTPenyl-1-P), which is then dephosphorylated to form the acireductone 1,2-dihydroxy-3-keto-5-methylthiopentene (DHK-MTPene). This chain is Enolase-phosphatase E1, found in Sordaria macrospora (strain ATCC MYA-333 / DSM 997 / K(L3346) / K-hell).